Consider the following 120-residue polypeptide: UPF0231 protein KPN78578_01240 (120 aa).

This sequence belongs to the UPF0231 family.

The sequence is that of UPF0231 protein KPN78578_01240 from Klebsiella pneumoniae subsp. pneumoniae (strain ATCC 700721 / MGH 78578).